A 341-amino-acid chain; its full sequence is ATPase GET3 (341 aa).

An ATP-binding site is contributed by 34 to 41; it reads KGGVGKTT. Residue Asp63 is part of the active site. 2 residues coordinate ATP: Glu245 and Asn272. The Zn(2+) site is built by Cys283 and Cys286.

It belongs to the arsA ATPase family. Homodimer.

The protein resides in the cytoplasm. It is found in the endoplasmic reticulum. Functionally, ATPase required for the post-translational delivery of tail-anchored (TA) proteins to the endoplasmic reticulum. Recognizes and selectively binds the transmembrane domain of TA proteins in the cytosol. This complex then targets to the endoplasmic reticulum by membrane-bound receptors, where the tail-anchored protein is released for insertion. This process is regulated by ATP binding and hydrolysis. ATP binding drives the homodimer towards the closed dimer state, facilitating recognition of newly synthesized TA membrane proteins. ATP hydrolysis is required for insertion. Subsequently, the homodimer reverts towards the open dimer state, lowering its affinity for the membrane-bound receptor, and returning it to the cytosol to initiate a new round of targeting. The polypeptide is ATPase GET3 (Ajellomyces dermatitidis (strain ER-3 / ATCC MYA-2586) (Blastomyces dermatitidis)).